The sequence spans 410 residues: Putative formamidase C869.04 (410 aa).

The protein belongs to the acetamidase/formamidase family. As to quaternary structure, homotrimer.

It localises to the cytoplasm. The protein resides in the nucleus. It catalyses the reaction formamide + H2O = formate + NH4(+). Hydrolyzes formamide with the production of ammonia which can be used as a source of nitrogen for growth. May also act on acetamide, propanamide and butanamide. The protein is Putative formamidase C869.04 of Schizosaccharomyces pombe (strain 972 / ATCC 24843) (Fission yeast).